Here is a 301-residue protein sequence, read N- to C-terminus: Putative two-component membrane permease complex subunit SMU_747c (301 aa).

8 helical membrane-spanning segments follow: residues 15 to 35 (LAIFLSIIIEALPFILLGAIL), 60 to 80 (ILFGTFVGFIFPSCECGIVPI), 97 to 117 (FLATAPIINPIVLFATFSAFG), 124 to 144 (FLRLFGAIIVAISLGILLGFI), 188 to 208 (YLIFGSFVAASMQIYVPTRIL), 211 to 231 (IGHNPLTAILIMMLLAFILSL), 238 to 258 (FIGTSLLATFGVAPVVAFLLI), and 278 to 298 (FILQFVGTSSLIIIIYCLIVG).

Belongs to the UPF0718 family. As to quaternary structure, interacts with SMU_746c.

It is found in the cell membrane. Could be part of a two-component membrane permease system responsible for amino acid transport under low pH. Involved in acidogenesis, biofilm formation and low-pH survival. This chain is Putative two-component membrane permease complex subunit SMU_747c, found in Streptococcus mutans serotype c (strain ATCC 700610 / UA159).